Reading from the N-terminus, the 543-residue chain is CTP synthase (543 aa).

The interval 1 to 265 (MTRYVFITGG…DREVLRHFGL (265 aa)) is amidoligase domain. Residue Ser13 coordinates CTP. Ser13 serves as a coordination point for UTP. 14-19 (SLGKGI) lines the ATP pocket. Tyr54 contributes to the L-glutamine binding site. Asp71 contributes to the ATP binding site. 2 residues coordinate Mg(2+): Asp71 and Glu139. CTP-binding positions include 146-148 (DIE), 186-191 (KTKPTQ), and Lys222. Residues 186–191 (KTKPTQ) and Lys222 contribute to the UTP site. Val240 lines the ATP pocket. A Glutamine amidotransferase type-1 domain is found at 291 to 542 (TIAVVGKYTN…IEAAVKQMRL (252 aa)). Position 353 (Gly353) interacts with L-glutamine. The active-site Nucleophile; for glutamine hydrolysis is the Cys380. L-glutamine contacts are provided by residues 381–384 (FGMQ), Glu404, and Arg470. Residues His515 and Glu517 contribute to the active site.

Belongs to the CTP synthase family. As to quaternary structure, homotetramer.

It carries out the reaction UTP + L-glutamine + ATP + H2O = CTP + L-glutamate + ADP + phosphate + 2 H(+). The catalysed reaction is L-glutamine + H2O = L-glutamate + NH4(+). It catalyses the reaction UTP + NH4(+) + ATP = CTP + ADP + phosphate + 2 H(+). The protein operates within pyrimidine metabolism; CTP biosynthesis via de novo pathway; CTP from UDP: step 2/2. With respect to regulation, allosterically activated by GTP, when glutamine is the substrate; GTP has no effect on the reaction when ammonia is the substrate. The allosteric effector GTP functions by stabilizing the protein conformation that binds the tetrahedral intermediate(s) formed during glutamine hydrolysis. Inhibited by the product CTP, via allosteric rather than competitive inhibition. Functionally, catalyzes the ATP-dependent amination of UTP to CTP with either L-glutamine or ammonia as the source of nitrogen. Regulates intracellular CTP levels through interactions with the four ribonucleotide triphosphates. The sequence is that of CTP synthase from Acidiphilium cryptum (strain JF-5).